The chain runs to 1000 residues: Chloride channel protein D (1000 aa).

2 stretches are compositionally biased toward low complexity: residues 1–16 and 38–60; these read MSSG…NDGN and NNNN…NSSV. Positions 1-90 are disordered; that stretch reads MSSGNPFDNG…SYDDDGDDEE (90 aa). At 1–256 the chain is on the cytoplasmic side; the sequence is MSSGNPFDNG…LASDHEVLRW (256 aa). Basic and acidic residues predominate over residues 71–80; that stretch reads RIQEEERLTE. The next 10 membrane-spanning stretches (helical) occupy residues 257-277, 290-310, 416-436, 442-462, 493-513, 534-554, 678-698, 710-730, 733-753, and 772-792; these read IVSL…HACV, AVLE…NTLL, GAGA…LFSL, FWSI…TYTM, IIPF…FTWI, LEVF…PLFF, LGLW…AYTA, MLVI…HILG, VSID…GGVS, and YLLP…ALIH. 2 consecutive CBS domains span residues 824 to 881 and 926 to 984; these read MAKK…ISDV and MNLT…YREL.

Belongs to the chloride channel (TC 2.A.49) family.

It localises to the membrane. In terms of biological role, voltage-gated chloride channel. Chloride channels may have several functions including the regulation of cell volume, membrane potential stabilization and signal transduction. Required for normal aggregation. The sequence is that of Chloride channel protein D (clcD) from Dictyostelium discoideum (Social amoeba).